Here is a 446-residue protein sequence, read N- to C-terminus: Indoleacetamide hydrolase (446 aa).

Active-site charge relay system residues include Lys-71 and Ser-146. Ser-170 serves as the catalytic Acyl-ester intermediate.

This sequence belongs to the amidase family.

It participates in plant hormone metabolism; auxin biosynthesis. Functionally, hydrolyzes indole-3-acetamide (IAM) into indole-3-acetic acid (IAA). The chain is Indoleacetamide hydrolase (iaaH) from Pseudomonas syringae pv. syringae.